Consider the following 193-residue polypeptide: Xanthine phosphoribosyltransferase (193 aa).

Positions 20 and 27 each coordinate xanthine. 128–132 (ANGQA) contributes to the 5-phospho-alpha-D-ribose 1-diphosphate binding site. Lys-156 serves as a coordination point for xanthine.

The protein belongs to the purine/pyrimidine phosphoribosyltransferase family. Xpt subfamily. In terms of assembly, homodimer.

It localises to the cytoplasm. It carries out the reaction XMP + diphosphate = xanthine + 5-phospho-alpha-D-ribose 1-diphosphate. Its pathway is purine metabolism; XMP biosynthesis via salvage pathway; XMP from xanthine: step 1/1. Its function is as follows. Converts the preformed base xanthine, a product of nucleic acid breakdown, to xanthosine 5'-monophosphate (XMP), so it can be reused for RNA or DNA synthesis. The protein is Xanthine phosphoribosyltransferase of Streptococcus equi subsp. equi (strain 4047).